The sequence spans 786 residues: DNA double-strand break repair Rad50 ATPase (786 aa).

ATP-binding positions include lysine 13, 33-39 (NGSGKTT), and glutamine 138. Coiled-coil stretches lie at residues 194 to 249 (LKAE…LKSI), 337 to 455 (EKAK…RALE), and 551 to 650 (ALER…VKAL). Residues 366–459 (EIAELQNKIN…KIRALEKYKG (94 aa)) enclose the Zinc-hook domain. Residues cysteine 411 and cysteine 414 each contribute to the Zn(2+) site.

It belongs to the SMC family. RAD50 subfamily. As to quaternary structure, homodimer. Forms a heterotetramer composed of two Mre11 subunits and two Rad50 subunits. Requires Zn(2+) as cofactor.

Functionally, part of the Rad50/Mre11 complex, which is involved in the early steps of DNA double-strand break (DSB) repair. The complex may facilitate opening of the processed DNA ends to aid in the recruitment of HerA and NurA. Rad50 controls the balance between DNA end bridging and DNA resection via ATP-dependent structural rearrangements of the Rad50/Mre11 complex. This chain is DNA double-strand break repair Rad50 ATPase, found in Nanoarchaeum equitans (strain Kin4-M).